We begin with the raw amino-acid sequence, 68 residues long: MLVLTRTNGQAIKIGNEGEITVTVLEVRGNQVRMGIDAPKHIAVHREEIYQRIQEEKPKAPPILEEVE.

It belongs to the CsrA/RsmA family. Homodimer; the beta-strands of each monomer intercalate to form a hydrophobic core, while the alpha-helices form wings that extend away from the core.

Its subcellular location is the cytoplasm. A key translational regulator that binds mRNA to regulate translation initiation and/or mRNA stability. Mediates global changes in gene expression, shifting from rapid growth to stress survival by linking envelope stress, the stringent response and the catabolite repression systems. Usually binds in the 5'-UTR; binding at or near the Shine-Dalgarno sequence prevents ribosome-binding, repressing translation, binding elsewhere in the 5'-UTR can activate translation and/or stabilize the mRNA. Its function is antagonized by small RNA(s). The polypeptide is Translational regulator CsrA 1 (Coxiella burnetii (strain RSA 493 / Nine Mile phase I)).